The sequence spans 357 residues: Carbamoyl phosphate synthase small chain (357 aa).

The tract at residues 1 to 168 (MSKRLLILED…STATAYPSPN (168 aa)) is CPSase. Residues serine 46, glycine 220, and glycine 222 each coordinate L-glutamine. A Glutamine amidotransferase type-1 domain is found at 172–357 (KVVVVDFGLK…FMDLMDNFKK (186 aa)). The active-site Nucleophile is cysteine 247. L-glutamine-binding residues include leucine 248, glutamine 251, asparagine 289, glycine 291, and tyrosine 292. Residues histidine 331 and aspartate 333 contribute to the active site.

Belongs to the CarA family. In terms of assembly, composed of two chains; the small (or glutamine) chain promotes the hydrolysis of glutamine to ammonia, which is used by the large (or ammonia) chain to synthesize carbamoyl phosphate. Tetramer of heterodimers (alpha,beta)4.

It catalyses the reaction hydrogencarbonate + L-glutamine + 2 ATP + H2O = carbamoyl phosphate + L-glutamate + 2 ADP + phosphate + 2 H(+). The catalysed reaction is L-glutamine + H2O = L-glutamate + NH4(+). It functions in the pathway amino-acid biosynthesis; L-arginine biosynthesis; carbamoyl phosphate from bicarbonate: step 1/1. The protein operates within pyrimidine metabolism; UMP biosynthesis via de novo pathway; (S)-dihydroorotate from bicarbonate: step 1/3. Functionally, small subunit of the glutamine-dependent carbamoyl phosphate synthetase (CPSase). CPSase catalyzes the formation of carbamoyl phosphate from the ammonia moiety of glutamine, carbonate, and phosphate donated by ATP, constituting the first step of 2 biosynthetic pathways, one leading to arginine and/or urea and the other to pyrimidine nucleotides. The small subunit (glutamine amidotransferase) binds and cleaves glutamine to supply the large subunit with the substrate ammonia. This is Carbamoyl phosphate synthase small chain from Lactococcus lactis subsp. cremoris (strain MG1363).